A 165-amino-acid polypeptide reads, in one-letter code: Urease accessory protein UreE (165 aa).

The protein belongs to the UreE family.

The protein resides in the cytoplasm. In terms of biological role, involved in urease metallocenter assembly. Binds nickel. Probably functions as a nickel donor during metallocenter assembly. This is Urease accessory protein UreE from Micrococcus luteus (strain ATCC 4698 / DSM 20030 / JCM 1464 / CCM 169 / CCUG 5858 / IAM 1056 / NBRC 3333 / NCIMB 9278 / NCTC 2665 / VKM Ac-2230) (Micrococcus lysodeikticus).